The primary structure comprises 410 residues: Divergent protein kinase domain 1C (410 aa).

The Cytoplasmic segment spans residues 1–19; it reads MARAAGERGRAARCGRWRR. Residues 18–19 carry the May mediate ER retention motif; it reads RR. A helical membrane pass occupies residues 20–40; that stretch reads GALLAFAAWTAGWVLAAALLL. The Lumenal segment spans residues 41-410; that stretch reads RAHPSVLSER…TLKELQEAEK (370 aa).

It belongs to the DIPK family. Among the many cysteines in the lumenal domain, most are probably involved in disulfide bonds. In terms of tissue distribution, mainly expressed in the brain and eye, some expression in kidney and skeletal muscle.

The protein localises to the endoplasmic reticulum membrane. The sequence is that of Divergent protein kinase domain 1C (Dipk1c) from Mus musculus (Mouse).